The chain runs to 395 residues: Neuromedin-U receptor 2 (395 aa).

The Extracellular segment spans residues 1-41; the sequence is MGKLENASWIHDSLMKYLNSTEEYLAYLCGPKRSDLSLPVS. 2 N-linked (GlcNAc...) asparagine glycosylation sites follow: N6 and N19. The helical transmembrane segment at 42–62 threads the bilayer; the sequence is VVYALIFVVGVIGNLLVCLVI. The Cytoplasmic segment spans residues 63-74; it reads ARHQTLKTPTNY. Residues 75–95 traverse the membrane as a helical segment; it reads YLFSLAVSDLLVLLLGMPLEV. The Extracellular portion of the chain corresponds to 96-115; sequence YELWHNYPFLFGPVGCYFKT. C111 and C196 are joined by a disulfide. A helical membrane pass occupies residues 116-138; that stretch reads ALFETVCFASILSVTTVSIERYV. At 139-157 the chain is on the cytoplasmic side; sequence AIVHPFRAKLESTRRRALR. The helical transmembrane segment at 158 to 178 threads the bilayer; the sequence is ILSLVWSFSVVFSLPNTSIHG. The Extracellular portion of the chain corresponds to 179–212; that stretch reads IKFQQFPNGSSVPGSATCTVTKPIWVYNFIIQAT. N186 carries N-linked (GlcNAc...) asparagine glycosylation. The helical transmembrane segment at 213 to 233 threads the bilayer; sequence SFLFYILPMTLISVLYYLMGL. Over 234–257 the chain is Cytoplasmic; that stretch reads RLKRDESLEADKVTVNIHRPSRKS. The helical transmembrane segment at 258–278 threads the bilayer; the sequence is VTKMLFVLVLVFAICWTPFHV. At 279–293 the chain is on the extracellular side; it reads DRLFFSFVDEWTESL. A helical membrane pass occupies residues 294–314; the sequence is AAVFNLIHVVSGVFFYLSSAV. The Cytoplasmic segment spans residues 315–395; sequence NPIIYNLLSR…TTVPCVEEVP (81 aa).

It belongs to the G-protein coupled receptor 1 family. Expressed primarily in brain tissues, more specifically in medulla and spinal cord. Widespread distribution in peripheral tissues.

The protein localises to the cell membrane. Functionally, receptor for the neuromedin-U and neuromedin-S neuropeptides. The protein is Neuromedin-U receptor 2 (Nmur2) of Mus musculus (Mouse).